The following is a 400-amino-acid chain: Nicotinate phosphoribosyltransferase (400 aa).

Residue His-220 is modified to Phosphohistidine; by autocatalysis.

The protein belongs to the NAPRTase family. Transiently phosphorylated on a His residue during the reaction cycle. Phosphorylation strongly increases the affinity for substrates and increases the rate of nicotinate D-ribonucleotide production. Dephosphorylation regenerates the low-affinity form of the enzyme, leading to product release.

It carries out the reaction nicotinate + 5-phospho-alpha-D-ribose 1-diphosphate + ATP + H2O = nicotinate beta-D-ribonucleotide + ADP + phosphate + diphosphate. The protein operates within cofactor biosynthesis; NAD(+) biosynthesis; nicotinate D-ribonucleotide from nicotinate: step 1/1. Functionally, catalyzes the synthesis of beta-nicotinate D-ribonucleotide from nicotinate and 5-phospho-D-ribose 1-phosphate at the expense of ATP. The chain is Nicotinate phosphoribosyltransferase from Salmonella heidelberg (strain SL476).